Consider the following 92-residue polypeptide: Elongation factor 1-beta (92 aa).

This sequence belongs to the EF-1-beta/EF-1-delta family.

Its function is as follows. Promotes the exchange of GDP for GTP in EF-1-alpha/GDP, thus allowing the regeneration of EF-1-alpha/GTP that could then be used to form the ternary complex EF-1-alpha/GTP/AAtRNA. The chain is Elongation factor 1-beta from Pyrobaculum calidifontis (strain DSM 21063 / JCM 11548 / VA1).